The following is a 326-amino-acid chain: MPRRPSSGRRVLKHQPLTFSPFMRLLSFASMARRDLSHPEDCQCSDEDISFDEKQKIPNLPRKGKEEQVSDSSDEEDSQEDVQADFEFFDPKPTDFHGVKILLQNYLDDKEWDLSSFVDCILEQTTVGTVVKVADDEDESVFALVTALNMARDKDNKCFRELKEFLRKVCSEKNIANNLEMLLEKKAQDVGLLVSQRVMNLPPQLLPPLYDGLFDEVSWAIEDEPTEKLRRSFRFKSYLLVTKIYKLKNPKQRKPRHGEEDIEDTVFLKPEDELFLELSSWSFTFPMRSQLVTSQEMKNYQLMGLVMAVEANKIPKFRQMLNSLID.

A disordered region spans residues 37–81; the sequence is SHPEDCQCSDEDISFDEKQKIPNLPRKGKEEQVSDSSDEEDSQED. Serine 45 bears the Phosphoserine mark. Residues 72–81 are compositionally biased toward acidic residues; it reads SSDEEDSQED.

Belongs to the BCP1 family.

The sequence is that of Protein BCCIP homolog from Arabidopsis thaliana (Mouse-ear cress).